The chain runs to 412 residues: Phosphoglycerate kinase, plasmid (412 aa).

Residues 39–41 (DLN), Arg55, 78–81 (HLGR), Arg133, and Arg166 contribute to the substrate site. ATP is bound by residues Lys217, Glu339, and 365-368 (GGDT).

This sequence belongs to the phosphoglycerate kinase family. Monomer.

The protein resides in the cytoplasm. The catalysed reaction is (2R)-3-phosphoglycerate + ATP = (2R)-3-phospho-glyceroyl phosphate + ADP. The protein operates within carbohydrate biosynthesis; Calvin cycle. The protein is Phosphoglycerate kinase, plasmid (cbbKP) of Cupriavidus necator (strain ATCC 17699 / DSM 428 / KCTC 22496 / NCIMB 10442 / H16 / Stanier 337) (Ralstonia eutropha).